Consider the following 214-residue polypeptide: Adenylate kinase (214 aa).

Position 10-15 (10-15 (GAGKGT)) interacts with ATP. The NMP stretch occupies residues 30-59 (STGDMLRAAVKAGTPLGLEAKKVMDAGQLV). AMP is bound by residues T31, R36, 57–59 (QLV), 85–88 (GFPR), and Q92. The interval 122-159 (GRRVHSGSGRVYHVVFNPPKVEGKDDVTGEDLSIRPDD) is LID. ATP-binding positions include R123 and 132–133 (VY). AMP-binding residues include R156 and R167. Q200 provides a ligand contact to ATP.

This sequence belongs to the adenylate kinase family. In terms of assembly, monomer.

It is found in the cytoplasm. It catalyses the reaction AMP + ATP = 2 ADP. It participates in purine metabolism; AMP biosynthesis via salvage pathway; AMP from ADP: step 1/1. In terms of biological role, catalyzes the reversible transfer of the terminal phosphate group between ATP and AMP. Plays an important role in cellular energy homeostasis and in adenine nucleotide metabolism. This chain is Adenylate kinase, found in Shewanella denitrificans (strain OS217 / ATCC BAA-1090 / DSM 15013).